Consider the following 106-residue polypeptide: CLAVATA3/ESR (CLE)-related protein 21 (106 aa).

Residues 1–31 form the signal peptide; it reads MLILSSRYAMKRDVLIIVIFTVLVLIIISRS. A glycan (N-linked (GlcNAc...) asparagine) is linked at Asn-47. Residues 72-82 are compositionally biased toward basic residues; it reads KVRRRSSRFRR. A disordered region spans residues 72 to 106; sequence KVRRRSSRFRRKTDGDEEEEEKRSIPTGPNPLHNK. 2 positions are modified to hydroxyproline: Pro-97 and Pro-100. O-linked (Ara...) hydroxyproline glycosylation occurs at Pro-100.

It belongs to the CLV3/ESR signal peptide family. Post-translationally, the O-glycosylation (arabinosylation) of the hydroxyproline Pro-100 enhances binding affinity of the CLE21p peptide for its receptor. As to expression, mostly expressed in leaves and apex, and, to a lower extent, in seedlings, flowers, stems and siliques.

The protein resides in the secreted. It is found in the extracellular space. Extracellular signal peptide that regulates cell fate. Represses root apical meristem maintenance. Regulates the transition of protophloem cells from proliferation to differentiation, thus impinging on postembryonic growth capacity of the root meristem; this signaling pathway requires CRN and CLV2. This chain is CLAVATA3/ESR (CLE)-related protein 21, found in Arabidopsis thaliana (Mouse-ear cress).